Here is a 152-residue protein sequence, read N- to C-terminus: Deoxyuridine 5'-triphosphate nucleotidohydrolase (152 aa).

Residues 72–74 (RSG), Asn85, and 89–91 (TVD) contribute to the substrate site.

This sequence belongs to the dUTPase family. Mg(2+) serves as cofactor.

It catalyses the reaction dUTP + H2O = dUMP + diphosphate + H(+). It participates in pyrimidine metabolism; dUMP biosynthesis; dUMP from dCTP (dUTP route): step 2/2. This enzyme is involved in nucleotide metabolism: it produces dUMP, the immediate precursor of thymidine nucleotides and it decreases the intracellular concentration of dUTP so that uracil cannot be incorporated into DNA. In Nitrobacter hamburgensis (strain DSM 10229 / NCIMB 13809 / X14), this protein is Deoxyuridine 5'-triphosphate nucleotidohydrolase.